The following is a 299-amino-acid chain: Recombination-associated protein RdgC (299 aa).

The protein belongs to the RdgC family.

Its subcellular location is the cytoplasm. The protein resides in the nucleoid. Functionally, may be involved in recombination. This Cupriavidus pinatubonensis (strain JMP 134 / LMG 1197) (Cupriavidus necator (strain JMP 134)) protein is Recombination-associated protein RdgC.